Reading from the N-terminus, the 79-residue chain is Ketoisovalerate oxidoreductase subunit VorC (79 aa).

2 consecutive 4Fe-4S ferredoxin-type domains span residues 4–33 and 40–70; these read AYPVINRVECKACERCIIACPRKVLYMSNK and HYVEYRGEGCNGCGNCYYTCPEINAIEVHIE. [4Fe-4S] cluster is bound by residues Cys13, Cys16, Cys19, Cys23, Cys49, Cys52, Cys55, and Cys59.

As to quaternary structure, heterotrimer of the VorA, VorB and VorC subunits. The cofactor is [4Fe-4S] cluster.

It catalyses the reaction 3-methyl-2-oxobutanoate + 2 oxidized [2Fe-2S]-[ferredoxin] + CoA = 2-methylpropanoyl-CoA + 2 reduced [2Fe-2S]-[ferredoxin] + CO2 + H(+). The protein is Ketoisovalerate oxidoreductase subunit VorC (vorC) of Methanothermobacter marburgensis (strain ATCC BAA-927 / DSM 2133 / JCM 14651 / NBRC 100331 / OCM 82 / Marburg) (Methanobacterium thermoautotrophicum).